A 130-amino-acid polypeptide reads, in one-letter code: Transcription antitermination protein NusB (130 aa).

The protein belongs to the NusB family.

Involved in transcription antitermination. Required for transcription of ribosomal RNA (rRNA) genes. Binds specifically to the boxA antiterminator sequence of the ribosomal RNA (rrn) operons. The sequence is that of Transcription antitermination protein NusB from Bacillus cereus (strain B4264).